Reading from the N-terminus, the 177-residue chain is Calcium-binding protein CML38 (177 aa).

Polar residues predominate over residues 1–11 (MKNNTQPQSSF). The disordered stretch occupies residues 1–44 (MKNNTQPQSSFKKLCRKLSPKREDSAGEIQQHNSSNGEDKNREL). 4 EF-hand domains span residues 39–74 (DKNR…LGEQ), 75–110 (LSDE…DDEE), 111–146 (EKKM…LGES), and 147–177 (RTTD…LMMR). Positions 52, 54, 56, 58, 63, 88, 90, 92, 94, and 99 each coordinate Ca(2+). The Ca(2+) site is built by D160, N162, D164, and E171.

In terms of assembly, binds to ABCG36. In terms of tissue distribution, expressed in cotyledons and guard cells of young leaves. In mature root, expressed in the epidermis, trichoblasts, young lateral root and root tip. Expressed from stage 9 to 15 of flower development in anther wall.

Potential calcium sensor that binds calcium in vitro. This Arabidopsis thaliana (Mouse-ear cress) protein is Calcium-binding protein CML38.